Reading from the N-terminus, the 338-residue chain is DNA-directed RNA polymerase subunit alpha (338 aa).

Residues 1-234 (MIHKNWAELI…DQLGIFVNFE (234 aa)) form an alpha N-terminal domain (alpha-NTD) region. Positions 250 to 338 (FNPLLLKKVD…DLAKKFEDSF (89 aa)) are alpha C-terminal domain (alpha-CTD).

It belongs to the RNA polymerase alpha chain family. In terms of assembly, homodimer. The RNAP catalytic core consists of 2 alpha, 1 beta, 1 beta' and 1 omega subunit. When a sigma factor is associated with the core the holoenzyme is formed, which can initiate transcription.

It catalyses the reaction RNA(n) + a ribonucleoside 5'-triphosphate = RNA(n+1) + diphosphate. In terms of biological role, DNA-dependent RNA polymerase catalyzes the transcription of DNA into RNA using the four ribonucleoside triphosphates as substrates. The chain is DNA-directed RNA polymerase subunit alpha from Roseobacter denitrificans (strain ATCC 33942 / OCh 114) (Erythrobacter sp. (strain OCh 114)).